The chain runs to 1026 residues: Isoleucine--tRNA ligase (1026 aa).

The 'HIGH' region signature appears at 51-61 (PTANGRPHIGH). Residues 591-595 (KMSKS) carry the 'KMSKS' region motif. Lysine 594 provides a ligand contact to ATP.

It belongs to the class-I aminoacyl-tRNA synthetase family. IleS type 2 subfamily. As to quaternary structure, monomer. Zn(2+) serves as cofactor.

Its subcellular location is the cytoplasm. It carries out the reaction tRNA(Ile) + L-isoleucine + ATP = L-isoleucyl-tRNA(Ile) + AMP + diphosphate. In terms of biological role, catalyzes the attachment of isoleucine to tRNA(Ile). As IleRS can inadvertently accommodate and process structurally similar amino acids such as valine, to avoid such errors it has two additional distinct tRNA(Ile)-dependent editing activities. One activity is designated as 'pretransfer' editing and involves the hydrolysis of activated Val-AMP. The other activity is designated 'posttransfer' editing and involves deacylation of mischarged Val-tRNA(Ile). The protein is Isoleucine--tRNA ligase of Thermoplasma acidophilum (strain ATCC 25905 / DSM 1728 / JCM 9062 / NBRC 15155 / AMRC-C165).